The sequence spans 1687 residues: Protein TOPAZ1 (1687 aa).

Disordered regions lie at residues 1 to 131 (MRRP…QPGF), 319 to 339 (EESSVGRKPRKRMKLSEKADE), 596 to 632 (LSRSGSEVISNTTEDTQLTSDTQSLTGNKKRDRGNLT), and 880 to 916 (TSEVPRISQEPNVPGEHQSTDSKYVETPVKKEPSDDL). The segment covering 31-41 (GAAGGCGPEAG) has biased composition (gly residues). A compositionally biased stretch (basic and acidic residues) spans 80 to 113 (RRVEGRRGQVSPSDRRGLEAAKEAEFPLQTERHT). Residues 598–622 (RSGSEVISNTTEDTQLTSDTQSLTG) show a composition bias toward polar residues. Basic and acidic residues predominate over residues 897-916 (QSTDSKYVETPVKKEPSDDL).

Its subcellular location is the cytoplasm. The protein resides in the cytosol. Important for normal spermatogenesis and male fertility. Specifically required for progression to the post-meiotic stages of spermatocyte development. Seems to be necessary for normal expression levels of a number of testis-expressed gene transcripts, although its role in this process is unclear. The sequence is that of Protein TOPAZ1 (TOPAZ1) from Macaca fascicularis (Crab-eating macaque).